A 197-amino-acid chain; its full sequence is uncharacterized protein (197 aa).

The disordered stretch occupies residues 1–31 (MMHFRKKSSISNTSDHDGANRASDVKISEDD). 2 positions are modified to phosphoserine: S11 and S23. Residues 14–31 (SDHDGANRASDVKISEDD) are compositionally biased toward basic and acidic residues. Residues K26 and K32 each participate in a glycyl lysine isopeptide (Lys-Gly) (interchain with G-Cter in ubiquitin) cross-link. Residues 157–197 (VGGASSQMYGEQAVYQPQQHVQTEEKQKKKKKGLFGRMKKK) form a disordered region. The span at 158–177 (GGASSQMYGEQAVYQPQQHV) shows a compositional bias: polar residues. Basic residues predominate over residues 184–197 (KKKKKGLFGRMKKK).

The protein to yeast YGR273c.

This is an uncharacterized protein from Saccharomyces cerevisiae (strain ATCC 204508 / S288c) (Baker's yeast).